Here is a 405-residue protein sequence, read N- to C-terminus: L-carnitine CoA-transferase (405 aa).

CoA is bound by residues K97 and R104. D169 acts as the Nucleophile in catalysis.

This sequence belongs to the CoA-transferase III family. CaiB subfamily. As to quaternary structure, homodimer.

The protein localises to the cytoplasm. It carries out the reaction crotonobetainyl-CoA + (R)-carnitine = crotonobetaine + (R)-carnitinyl-CoA. It catalyses the reaction 4-(trimethylamino)butanoyl-CoA + (R)-carnitine = (R)-carnitinyl-CoA + 4-(trimethylamino)butanoate. Its pathway is amine and polyamine metabolism; carnitine metabolism. Its function is as follows. Catalyzes the reversible transfer of the CoA moiety from gamma-butyrobetainyl-CoA to L-carnitine to generate L-carnitinyl-CoA and gamma-butyrobetaine. Is also able to catalyze the reversible transfer of the CoA moiety from gamma-butyrobetainyl-CoA or L-carnitinyl-CoA to crotonobetaine to generate crotonobetainyl-CoA. The polypeptide is L-carnitine CoA-transferase (Salmonella enteritidis PT4 (strain P125109)).